The chain runs to 146 residues: Large ribosomal subunit protein bL21 (146 aa).

The disordered stretch occupies residues 117-146; it reads ITIGKSAPKSSSKKETVKKETKPKSEKSTN. The segment covering 128–146 has biased composition (basic and acidic residues); sequence SKKETVKKETKPKSEKSTN.

Belongs to the bacterial ribosomal protein bL21 family. Part of the 50S ribosomal subunit. Contacts protein L20.

Functionally, this protein binds to 23S rRNA in the presence of protein L20. The protein is Large ribosomal subunit protein bL21 of Prochlorococcus marinus (strain MIT 9301).